A 729-amino-acid chain; its full sequence is Phosphoribosylformylglycinamidine synthase subunit PurL (729 aa).

Residue histidine 54 is part of the active site. 2 residues coordinate ATP: tyrosine 57 and lysine 96. Glutamate 98 lines the Mg(2+) pocket. Substrate is bound by residues 99 to 102 (SHNH) and arginine 121. Catalysis depends on histidine 100, which acts as the Proton acceptor. Aspartate 122 is a Mg(2+) binding site. Residue glutamine 245 participates in substrate binding. Aspartate 273 is a Mg(2+) binding site. 317–319 (ETQ) contacts substrate. The ATP site is built by aspartate 495 and glycine 532. Asparagine 533 serves as a coordination point for Mg(2+). Residue serine 535 coordinates substrate.

This sequence belongs to the FGAMS family. As to quaternary structure, monomer. Part of the FGAM synthase complex composed of 1 PurL, 1 PurQ and 2 PurS subunits.

Its subcellular location is the cytoplasm. The enzyme catalyses N(2)-formyl-N(1)-(5-phospho-beta-D-ribosyl)glycinamide + L-glutamine + ATP + H2O = 2-formamido-N(1)-(5-O-phospho-beta-D-ribosyl)acetamidine + L-glutamate + ADP + phosphate + H(+). The protein operates within purine metabolism; IMP biosynthesis via de novo pathway; 5-amino-1-(5-phospho-D-ribosyl)imidazole from N(2)-formyl-N(1)-(5-phospho-D-ribosyl)glycinamide: step 1/2. Part of the phosphoribosylformylglycinamidine synthase complex involved in the purines biosynthetic pathway. Catalyzes the ATP-dependent conversion of formylglycinamide ribonucleotide (FGAR) and glutamine to yield formylglycinamidine ribonucleotide (FGAM) and glutamate. The FGAM synthase complex is composed of three subunits. PurQ produces an ammonia molecule by converting glutamine to glutamate. PurL transfers the ammonia molecule to FGAR to form FGAM in an ATP-dependent manner. PurS interacts with PurQ and PurL and is thought to assist in the transfer of the ammonia molecule from PurQ to PurL. The polypeptide is Phosphoribosylformylglycinamidine synthase subunit PurL (Staphylococcus aureus (strain USA300)).